A 539-amino-acid polypeptide reads, in one-letter code: Chaperonin GroEL (539 aa).

ATP-binding positions include 29–32, 86–90, Gly-413, 477–479, and Asp-493; these read TLGP, DGTTT, and NAA.

Belongs to the chaperonin (HSP60) family. As to quaternary structure, forms a cylinder of 14 subunits composed of two heptameric rings stacked back-to-back. Interacts with the co-chaperonin GroES.

Its subcellular location is the cytoplasm. The enzyme catalyses ATP + H2O + a folded polypeptide = ADP + phosphate + an unfolded polypeptide.. Its function is as follows. Together with its co-chaperonin GroES, plays an essential role in assisting protein folding. The GroEL-GroES system forms a nano-cage that allows encapsulation of the non-native substrate proteins and provides a physical environment optimized to promote and accelerate protein folding. The protein is Chaperonin GroEL of Leifsonia xyli subsp. xyli (strain CTCB07).